The primary structure comprises 1029 residues: Serine/threonine-protein kinase KSP1 (1029 aa).

One can recognise a Protein kinase domain in the interval 18–351; it reads YQKIEDISEG…TELQNLSEYT (334 aa). ATP-binding positions include 27–35 and K47; that span reads GSYGYVSLA. Acidic residues predominate over residues 56-79; the sequence is GQYDGPQDDENDCDSSDCDDDEDT. Residues 56–105 form a disordered region; the sequence is GQYDGPQDDENDCDSSDCDDDEDTKVDTDRHENENGNASSNNGSSREKKH. Basic and acidic residues predominate over residues 80–89; the sequence is KVDTDRHENE. A compositionally biased stretch (low complexity) spans 90–99; sequence NGNASSNNGS. D207 functions as the Proton acceptor in the catalytic mechanism. The disordered stretch occupies residues 377–397; that stretch reads VPPSSAPVSLPTPISSSNKQH. Residues S416 and S419 each carry the phosphoserine modification. T501, T504, and T526 each carry phosphothreonine. S529 carries the phosphoserine modification. The disordered stretch occupies residues 532 to 570; it reads HRYMEGFSNNNNKQYRQNRNYNNNNNNSNNNHGSNYNNF. The span at 538 to 570 shows a compositional bias: low complexity; it reads FSNNNNKQYRQNRNYNNNNNNSNNNHGSNYNNF. At S646 the chain carries Phosphoserine. Residues 732 to 824 form a disordered region; that stretch reads STNHNNNGNN…SDSKELEQER (93 aa). Residues 734–743 show a composition bias toward low complexity; that stretch reads NHNNNGNNNH. Positions 744-754 are enriched in polar residues; it reads IDTNSTTNQYH. A compositionally biased stretch (basic and acidic residues) spans 813–824; that stretch reads HSSDSKELEQER. S845 and S884 each carry phosphoserine. A disordered region spans residues 949–978; the sequence is EYEGESDKMAHGKMEGGDNESSSTSPDERQ. Residues 953–964 show a composition bias toward basic and acidic residues; the sequence is ESDKMAHGKMEG. A Phosphothreonine modification is found at T1005. S1014 is subject to Phosphoserine.

This sequence belongs to the protein kinase superfamily. Ser/Thr protein kinase family. CK2 subfamily. Post-translationally, phosphorylated by PKA in a TORC1-dependent manner. Phosphorylation at PKA consensus sites RRxS/T decreases upon rapamycin treatment.

It localises to the nucleus. The enzyme catalyses L-seryl-[protein] + ATP = O-phospho-L-seryl-[protein] + ADP + H(+). The catalysed reaction is L-threonyl-[protein] + ATP = O-phospho-L-threonyl-[protein] + ADP + H(+). In terms of biological role, may act on PRP20. The chain is Serine/threonine-protein kinase KSP1 (KSP1) from Saccharomyces cerevisiae (strain ATCC 204508 / S288c) (Baker's yeast).